Reading from the N-terminus, the 313-residue chain is Acetaldehyde dehydrogenase 2 (313 aa).

S12 to I15 is a binding site for NAD(+). C132 serves as the catalytic Acyl-thioester intermediate. Residues S163–N171 and N287 contribute to the NAD(+) site.

This sequence belongs to the acetaldehyde dehydrogenase family.

The enzyme catalyses acetaldehyde + NAD(+) + CoA = acetyl-CoA + NADH + H(+). The sequence is that of Acetaldehyde dehydrogenase 2 (amnH) from Paraburkholderia xenovorans (strain LB400).